Consider the following 136-residue polypeptide: Urease subunit beta (136 aa).

It belongs to the urease beta subunit family. As to quaternary structure, heterotrimer of UreA (gamma), UreB (beta) and UreC (alpha) subunits. Three heterotrimers associate to form the active enzyme.

It localises to the cytoplasm. It carries out the reaction urea + 2 H2O + H(+) = hydrogencarbonate + 2 NH4(+). It functions in the pathway nitrogen metabolism; urea degradation; CO(2) and NH(3) from urea (urease route): step 1/1. This chain is Urease subunit beta, found in Staphylococcus aureus (strain Mu3 / ATCC 700698).